The following is a 638-amino-acid chain: 1-deoxy-D-xylulose-5-phosphate synthase (638 aa).

Thiamine diphosphate contacts are provided by residues H72 and 113 to 115 (GHA). A Mg(2+)-binding site is contributed by D144. Thiamine diphosphate contacts are provided by residues 145 to 146 (GA), N174, Y287, and E370. N174 lines the Mg(2+) pocket.

The protein belongs to the transketolase family. DXPS subfamily. As to quaternary structure, homodimer. The cofactor is Mg(2+). Thiamine diphosphate is required as a cofactor.

It catalyses the reaction D-glyceraldehyde 3-phosphate + pyruvate + H(+) = 1-deoxy-D-xylulose 5-phosphate + CO2. Its pathway is metabolic intermediate biosynthesis; 1-deoxy-D-xylulose 5-phosphate biosynthesis; 1-deoxy-D-xylulose 5-phosphate from D-glyceraldehyde 3-phosphate and pyruvate: step 1/1. Catalyzes the acyloin condensation reaction between C atoms 2 and 3 of pyruvate and glyceraldehyde 3-phosphate to yield 1-deoxy-D-xylulose-5-phosphate (DXP). This chain is 1-deoxy-D-xylulose-5-phosphate synthase, found in Picosynechococcus sp. (strain ATCC 27264 / PCC 7002 / PR-6) (Agmenellum quadruplicatum).